The following is a 442-amino-acid chain: Thymidine phosphorylase (442 aa).

The protein belongs to the thymidine/pyrimidine-nucleoside phosphorylase family. In terms of assembly, homodimer.

The catalysed reaction is thymidine + phosphate = 2-deoxy-alpha-D-ribose 1-phosphate + thymine. The protein operates within pyrimidine metabolism; dTMP biosynthesis via salvage pathway; dTMP from thymine: step 1/2. Its function is as follows. The enzymes which catalyze the reversible phosphorolysis of pyrimidine nucleosides are involved in the degradation of these compounds and in their utilization as carbon and energy sources, or in the rescue of pyrimidine bases for nucleotide synthesis. In Pectobacterium atrosepticum (strain SCRI 1043 / ATCC BAA-672) (Erwinia carotovora subsp. atroseptica), this protein is Thymidine phosphorylase.